Reading from the N-terminus, the 121-residue chain is Large ribosomal subunit protein bL12 (121 aa).

This sequence belongs to the bacterial ribosomal protein bL12 family. Homodimer. Part of the ribosomal stalk of the 50S ribosomal subunit. Forms a multimeric L10(L12)X complex, where L10 forms an elongated spine to which 2 to 4 L12 dimers bind in a sequential fashion. Binds GTP-bound translation factors.

Its function is as follows. Forms part of the ribosomal stalk which helps the ribosome interact with GTP-bound translation factors. Is thus essential for accurate translation. This Pseudomonas fluorescens (strain SBW25) protein is Large ribosomal subunit protein bL12.